The following is a 214-amino-acid chain: Serine protease inhibitor 2.1 (214 aa).

This sequence belongs to the serpin family.

In Rattus norvegicus (Rat), this protein is Serine protease inhibitor 2.1.